Consider the following 137-residue polypeptide: Large ribosomal subunit protein uL16c (137 aa).

This sequence belongs to the universal ribosomal protein uL16 family. In terms of assembly, part of the 50S ribosomal subunit.

It is found in the plastid. Its subcellular location is the chloroplast. The chain is Large ribosomal subunit protein uL16c from Rhodomonas salina (Cryptomonas salina).